The sequence spans 171 residues: Shikimate kinase (171 aa).

14–19 (GAGKST) lines the ATP pocket. Residue S18 coordinates Mg(2+). Substrate-binding residues include D36, R60, and G82. R120 contacts ATP. Substrate is bound at residue R139. Q156 contributes to the ATP binding site.

Belongs to the shikimate kinase family. In terms of assembly, monomer. Mg(2+) serves as cofactor.

The protein localises to the cytoplasm. It catalyses the reaction shikimate + ATP = 3-phosphoshikimate + ADP + H(+). The protein operates within metabolic intermediate biosynthesis; chorismate biosynthesis; chorismate from D-erythrose 4-phosphate and phosphoenolpyruvate: step 5/7. Its function is as follows. Catalyzes the specific phosphorylation of the 3-hydroxyl group of shikimic acid using ATP as a cosubstrate. This chain is Shikimate kinase, found in Shewanella amazonensis (strain ATCC BAA-1098 / SB2B).